Reading from the N-terminus, the 1034-residue chain is Teashirt homolog 2 (1034 aa).

The tract at residues 1–90 is disordered; the sequence is MPRRKQQAPK…NESLLSDASD (90 aa). Residues 13-38 adopt a coiled-coil conformation; that stretch reads AGYAQEEQLKEEEEIKEEEEEEDSGS. The segment covering 21 to 36 has biased composition (acidic residues); it reads LKEEEEIKEEEEEEDS. Polar residues predominate over residues 65–90; it reads SYQNSPGSHLSNQDAENESLLSDASD. Lys188 participates in a covalent cross-link: Glycyl lysine isopeptide (Lys-Gly) (interchain with G-Cter in SUMO2). 2 C2H2-type zinc fingers span residues 215–239 and 275–299; these read FRCRQCSAAYDTLVELTVHMNETGH and LKCMFCGDSFDSLQDLSVHMIKTKH. Residues 239–265 form a disordered region; that stretch reads HYQDDNRKKDKLRPTSYSKPRKRAFQD. Glycyl lysine isopeptide (Lys-Gly) (interchain with G-Cter in SUMO2) cross-links involve residues Lys306 and Lys315. The segment at 380-404 adopts a C2H2-type 3; atypical zinc-finger fold; sequence LKCMECGSSHDTLQQLTTHMMVTGH. A Glycyl lysine isopeptide (Lys-Gly) (interchain with G-Cter in SUMO2) cross-link involves residue Lys417. The span at 432–455 shows a compositional bias: polar residues; the sequence is LSEAPNSDSLAPKPSSNSASDCTA. The interval 432–496 is disordered; it reads LSEAPNSDSL…PLQKPLDPTI (65 aa). Over residues 459–482 the composition is skewed to basic and acidic residues; the sequence is ELKKESKKERPEETSKDEKVVKSE. Glycyl lysine isopeptide (Lys-Gly) (interchain with G-Cter in SUMO2) cross-links involve residues Lys461, Lys480, Lys497, Lys601, and Lys652. 2 disordered regions span residues 598-676 and 763-789; these read TQVK…TSAL and QPIDLTKSKSKKAESSQAQSCMSPPQK. The span at 600-668 shows a compositional bias: basic and acidic residues; sequence VKKESEDKDE…KEGSEKEKPQ (69 aa). Residues Lys800 and Lys820 each participate in a glycyl lysine isopeptide (Lys-Gly) (interchain with G-Cter in SUMO2) cross-link. A DNA-binding region (homeobox; atypical) is located at residues 841–911; sequence RKGRQSNWNP…NVKYQLRKTG (71 aa). Residues 926-948 form a C2H2-type 4 zinc finger; the sequence is FYCSDCASQFRTPSTYISHLESH. Lys966 participates in a covalent cross-link: Glycyl lysine isopeptide (Lys-Gly) (interchain with G-Cter in SUMO2). Ser980 is subject to Phosphoserine. Residues 994–1017 form a C2H2-type 5 zinc finger; that stretch reads FKCKLCCRTFVSKHAVKLHLSKTH. A disordered region spans residues 1014–1034; it reads SKTHSKSPEHHSQFVTDVDEE.

This sequence belongs to the teashirt C2H2-type zinc-finger protein family. Interacts (via homeobox domain) with APBB1 (via PID domain 1). Sumoylated. As to expression, expressed in brain; strongly reduced in post-mortem elderly subjects with Alzheimer disease.

The protein resides in the nucleus. Functionally, probable transcriptional regulator involved in developmental processes. May act as a transcriptional repressor (Potential). The protein is Teashirt homolog 2 (TSHZ2) of Homo sapiens (Human).